The primary structure comprises 306 residues: Ribosomal protein L11 methyltransferase (306 aa).

S-adenosyl-L-methionine is bound by residues Thr154, Gly179, Asp201, and Asn242.

The protein belongs to the methyltransferase superfamily. PrmA family.

It localises to the cytoplasm. The catalysed reaction is L-lysyl-[protein] + 3 S-adenosyl-L-methionine = N(6),N(6),N(6)-trimethyl-L-lysyl-[protein] + 3 S-adenosyl-L-homocysteine + 3 H(+). Functionally, methylates ribosomal protein L11. This chain is Ribosomal protein L11 methyltransferase, found in Xanthomonas axonopodis pv. citri (strain 306).